Here is a 333-residue protein sequence, read N- to C-terminus: tRNA(Ile)-lysidine synthase (333 aa).

25–30 (SGGPDS) contacts ATP.

Belongs to the tRNA(Ile)-lysidine synthase family.

The protein resides in the cytoplasm. The catalysed reaction is cytidine(34) in tRNA(Ile2) + L-lysine + ATP = lysidine(34) in tRNA(Ile2) + AMP + diphosphate + H(+). In terms of biological role, ligates lysine onto the cytidine present at position 34 of the AUA codon-specific tRNA(Ile) that contains the anticodon CAU, in an ATP-dependent manner. Cytidine is converted to lysidine, thus changing the amino acid specificity of the tRNA from methionine to isoleucine. The protein is tRNA(Ile)-lysidine synthase of Ureaplasma parvum serovar 3 (strain ATCC 700970).